Reading from the N-terminus, the 288-residue chain is Nucleotide-binding protein Mlg_2233 (288 aa).

11-18 (GLSGSGKS) is a binding site for ATP. 63 to 66 (DARN) serves as a coordination point for GTP.

It belongs to the RapZ-like family.

Functionally, displays ATPase and GTPase activities. The polypeptide is Nucleotide-binding protein Mlg_2233 (Alkalilimnicola ehrlichii (strain ATCC BAA-1101 / DSM 17681 / MLHE-1)).